The following is a 237-amino-acid chain: Intracellular ribonuclease LX (237 aa).

Positions 1 to 24 (MMKSQKKLLIKIIVVQCLLVLCVT) are excised as a propeptide. An RNA-binding site is contributed by Gln36. Cys42 and Cys48 are joined by a disulfide. Residues His63, Phe113, 116–117 (HE), and 120–121 (KH) each bind RNA. His63 serves as the catalytic Proton donor. Intrachain disulfides connect Cys78/Cys124, Cys183/Cys219, and Cys199/Cys210. The active site involves Glu117. Residue His121 is the Proton acceptor of the active site.

The protein belongs to the RNase T2 family.

Its subcellular location is the cytoplasm. The enzyme catalyses a ribonucleotidyl-ribonucleotide-RNA + H2O = a 3'-end 3'-phospho-ribonucleotide-RNA + a 5'-end dephospho-ribonucleoside-RNA + H(+). This is Intracellular ribonuclease LX (RNALX) from Solanum lycopersicum (Tomato).